The primary structure comprises 102 residues: Small ribosomal subunit protein uS10 (102 aa).

This sequence belongs to the universal ribosomal protein uS10 family. In terms of assembly, part of the 30S ribosomal subunit.

Its function is as follows. Involved in the binding of tRNA to the ribosomes. The protein is Small ribosomal subunit protein uS10 of Geobacter sulfurreducens (strain ATCC 51573 / DSM 12127 / PCA).